A 1383-amino-acid polypeptide reads, in one-letter code: Palladin (1383 aa).

Disordered regions lie at residues 1–22 (MSGTSSHESFYDSLSDMQEESK), 52–169 (DSET…SQLC), and 183–238 (FKAA…KSPG). A compositionally biased stretch (basic and acidic residues) spans 78–96 (HPSHKETKLGEHASRRPQD). Polar residues predominate over residues 191–201 (RSPNGESSSPD). Ser-192 bears the Phosphoserine mark. Low complexity predominate over residues 210 to 223 (QPSALLSASASQSP). In terms of domain architecture, Ig-like C2-type 1 spans 271–360 (PRFIQKLRSQ…GSDTTSAEVF (90 aa)). An intrachain disulfide couples Cys-292 to Cys-344. Ser-401 carries the phosphoserine modification. Residues 440 to 539 (PPVFTKELQN…ATSTAQLVVT (100 aa)) enclose the Ig-like C2-type 2 domain. Cys-462 and Cys-521 are disulfide-bonded. The interaction with VASP stretch occupies residues 562–566 (FPPPP). Disordered regions lie at residues 609–653 (ETNG…LAKP), 673–728 (AGAR…SSGS), and 740–846 (AQNL…RFGH). Ser-632 is modified (phosphoserine). Thr-635 is modified (phosphothreonine). At Ser-641 the chain carries Phosphoserine. An interaction with LASP1 region spans residues 646–676 (PPPLLAKPKLDPLKLQQLQNQIRLEQEAGAR). The interaction with SORBS2, SPIN90 and SRC stretch occupies residues 676–696 (RQPPPAPRSAPPSPPFPPPPA). The span at 677 to 697 (QPPPAPRSAPPSPPFPPPPAF) shows a compositional bias: pro residues. Phosphoserine occurs at positions 684, 688, and 728. A compositionally biased stretch (low complexity) spans 745–763 (PASGHGTPASSPSSSSLPS). The tract at residues 766–831 (SPTPRQFGRA…PPPPPPLPSP (66 aa)) is interaction with EPS8. The tract at residues 796–831 (SPSPPPPPPPVFSPTAAFPVPDVFPLPPPPPPLPSP) is interaction with SORBS2, SPIN90, SRC and PFN1. 2 stretches are compositionally biased toward pro residues: residues 797–807 (PSPPPPPPPVF) and 817–830 (DVFPLPPPPPPLPS). Residues 819-823 (FPLPP) form an interaction with VASP region. Polar residues predominate over residues 832–846 (GQASHCSSPATRFGH). An interaction with ACTN region spans residues 833-890 (QASHCSSPATRFGHSQTPAAFLSALLPSQPPPAAVNALGLPKGVTPAGFPKKASRTAR). A phosphoserine mark is found at Ser-893, Ser-979, and Ser-984. The region spanning 1001-1085 (PFFEMKLKHY…MAANPQGRIS (85 aa)) is the Ig-like C2-type 3 domain. Residues 1096 to 1125 (NQRGRSPRSPSGHPHVRRPRSRSRDSGDEN) are disordered. Over residues 1098–1108 (RGRSPRSPSGH) the composition is skewed to low complexity. Ser-1101, Ser-1104, Ser-1106, and Ser-1116 each carry phosphoserine. Phosphoserine; by PKB/AKT1 is present on Ser-1118. Phosphoserine is present on Ser-1121. Ig-like C2-type domains lie at 1135-1226 (PHFL…LVVA) and 1233-1324 (PPVF…ARLD). 2 interaction with EZR regions span residues 1137 to 1226 (FLQA…LVVA) and 1236 to 1326 (FIEK…LDVY). Cys-1156 and Cys-1208 are oxidised to a cystine. Ser-1352 bears the Phosphoserine mark.

The protein belongs to the myotilin/palladin family. Interacts with EPS8. Interacts with LASP1. Interacts with VASP. Interacts with ACTN. Interacts with SORBS2. Interacts with PFN1. Interacts with LPP. Interacts with SPIN90. Interacts with SRC. Interacts with EZR. Interacts with RAI14. Post-translationally, phosphorylated predominantly on serines and, to a lesser extent, on tyrosines. Phosphorylation at Ser-1118 by PKB/AKT1 modulates cytoskeletal organization and cell motility. In terms of tissue distribution, detected in both muscle and non-muscle tissues. High expression in prostate, ovary, colon, and kidney. Not detected in spleen, skeletal muscle, lung and peripheral blood lymphocytes (at protein level). Protein is overexpressed in FA6, HPAF, IMIM-PC2, SUIT-2 and PancTu-II sporadic pancreatic cancer cell lines.

Its subcellular location is the cytoplasm. The protein resides in the cytoskeleton. It localises to the cell junction. The protein localises to the focal adhesion. It is found in the myofibril. Its subcellular location is the sarcomere. The protein resides in the z line. It localises to the cell projection. The protein localises to the ruffle. It is found in the podosome. Its subcellular location is the lamellipodium. The protein resides in the axon. It localises to the growth cone. Functionally, cytoskeletal protein required for organization of normal actin cytoskeleton. Roles in establishing cell morphology, motility, cell adhesion and cell-extracellular matrix interactions in a variety of cell types. May function as a scaffolding molecule with the potential to influence both actin polymerization and the assembly of existing actin filaments into higher-order arrays. Binds to proteins that bind to either monomeric or filamentous actin. Localizes at sites where active actin remodeling takes place, such as lamellipodia and membrane ruffles. Different isoforms may have functional differences. Involved in the control of morphological and cytoskeletal changes associated with dendritic cell maturation. Involved in targeting ACTN to specific subcellular foci. This chain is Palladin (PALLD), found in Homo sapiens (Human).